A 101-amino-acid chain; its full sequence is Small nuclear ribonucleoprotein Sm D3 (101 aa).

A Sm domain is found at 6 to 78; that stretch reads IPVKLLNEAQ…IKFIVVPDLL (73 aa).

This sequence belongs to the snRNP core protein family. In terms of assembly, component of the Sm core complex, present in spliceosomal snRNP U1, U2, U4/U6 and U5. The core complex contains SMB1, SMD1, SMD2, SMD3, SME1, SMX3 and SMX2 (Sm proteins B, D1, D2, D3, E, F and G, respectively), and is probably a heptameric ring structure. SMD3 specifically interacts with SMB1. Belongs to the CWC complex (or CEF1-associated complex), a spliceosome sub-complex reminiscent of a late-stage spliceosome composed of the U2, U5 and U6 snRNAs and at least BUD13, BUD31, BRR2, CDC40, CEF1, CLF1, CUS1, CWC2, CWC15, CWC21, CWC22, CWC23, CWC24, CWC25, CWC27, ECM2, HSH155, IST3, ISY1, LEA1, MSL1, NTC20, PRP8, PRP9, PRP11, PRP19, PRP21, PRP22, PRP45, PRP46, SLU7, SMB1, SMD1, SMD2, SMD3, SMX2, SMX3, SNT309, SNU114, SPP2, SYF1, SYF2, RSE1 and YJU2. Component of the U4/U6-U5 tri-snRNP complex composed of the U4, U6 and U5 snRNAs and at least PRP3, PRP4, PRP6, PRP8, PRP18, PRP31, PRP38, SNU13, SNU23, SNU66, SNU114, SPP381, SMB1, SMD1, SMD2, SMD3, SMX2, SMX3, LSM2, LSM3, LSM4, LSM5, LSM6, LSM7, LSM8, BRR2 and DIB1.

Its subcellular location is the cytoplasm. It localises to the cytosol. The protein localises to the nucleus. Functionally, plays a role in pre-mRNA splicing as a core component of the spliceosomal U1, U2, U4 and U5 small nuclear ribonucleoproteins (snRNPs), the building blocks of the spliceosome. Also binds telomerase RNA and is required for its accumulation. In Saccharomyces cerevisiae (strain ATCC 204508 / S288c) (Baker's yeast), this protein is Small nuclear ribonucleoprotein Sm D3 (SMD3).